Reading from the N-terminus, the 360-residue chain is Histidinol-phosphate aminotransferase 2 (360 aa).

K218 is modified (N6-(pyridoxal phosphate)lysine).

It belongs to the class-II pyridoxal-phosphate-dependent aminotransferase family. Histidinol-phosphate aminotransferase subfamily. As to quaternary structure, homodimer. Pyridoxal 5'-phosphate is required as a cofactor.

The enzyme catalyses L-histidinol phosphate + 2-oxoglutarate = 3-(imidazol-4-yl)-2-oxopropyl phosphate + L-glutamate. Its pathway is amino-acid biosynthesis; L-histidine biosynthesis; L-histidine from 5-phospho-alpha-D-ribose 1-diphosphate: step 7/9. In Nitrosococcus oceani (strain ATCC 19707 / BCRC 17464 / JCM 30415 / NCIMB 11848 / C-107), this protein is Histidinol-phosphate aminotransferase 2.